The sequence spans 431 residues: UDP-N-acetylmuramate--L-alanine ligase (431 aa).

108-114 (GAHGKST) lines the ATP pocket.

It belongs to the MurCDEF family.

It localises to the cytoplasm. The enzyme catalyses UDP-N-acetyl-alpha-D-muramate + L-alanine + ATP = UDP-N-acetyl-alpha-D-muramoyl-L-alanine + ADP + phosphate + H(+). It participates in cell wall biogenesis; peptidoglycan biosynthesis. Cell wall formation. This is UDP-N-acetylmuramate--L-alanine ligase from Campylobacter jejuni (strain RM1221).